Reading from the N-terminus, the 387-residue chain is Phosphoglycerate kinase (387 aa).

Substrate-binding positions include 21–23 (DLN), arginine 36, 59–62 (HLGR), arginine 113, and arginine 146. Residues lysine 197, glutamate 314, and 340-343 (GGDT) contribute to the ATP site.

This sequence belongs to the phosphoglycerate kinase family. As to quaternary structure, monomer.

The protein resides in the cytoplasm. It catalyses the reaction (2R)-3-phosphoglycerate + ATP = (2R)-3-phospho-glyceroyl phosphate + ADP. It functions in the pathway carbohydrate degradation; glycolysis; pyruvate from D-glyceraldehyde 3-phosphate: step 2/5. The chain is Phosphoglycerate kinase from Pseudomonas putida (strain W619).